The sequence spans 285 residues: Urease accessory protein UreD (285 aa).

It belongs to the UreD family. In terms of assembly, ureD, UreF and UreG form a complex that acts as a GTP-hydrolysis-dependent molecular chaperone, activating the urease apoprotein by helping to assemble the nickel containing metallocenter of UreC. The UreE protein probably delivers the nickel.

The protein resides in the cytoplasm. Required for maturation of urease via the functional incorporation of the urease nickel metallocenter. This Azoarcus sp. (strain BH72) protein is Urease accessory protein UreD.